We begin with the raw amino-acid sequence, 368 residues long: Phosphoserine aminotransferase (368 aa).

An L-glutamate-binding site is contributed by Arg44. Pyridoxal 5'-phosphate-binding positions include 78–79, Trp104, Thr157, Asp179, and Gln202; that span reads AT. Position 203 is an N6-(pyridoxal phosphate)lysine (Lys203). Residue 244 to 245 participates in pyridoxal 5'-phosphate binding; sequence NT.

Belongs to the class-V pyridoxal-phosphate-dependent aminotransferase family. SerC subfamily. As to quaternary structure, homodimer. Pyridoxal 5'-phosphate serves as cofactor.

It localises to the cytoplasm. The enzyme catalyses O-phospho-L-serine + 2-oxoglutarate = 3-phosphooxypyruvate + L-glutamate. It carries out the reaction 4-(phosphooxy)-L-threonine + 2-oxoglutarate = (R)-3-hydroxy-2-oxo-4-phosphooxybutanoate + L-glutamate. It participates in amino-acid biosynthesis; L-serine biosynthesis; L-serine from 3-phospho-D-glycerate: step 2/3. It functions in the pathway cofactor biosynthesis; pyridoxine 5'-phosphate biosynthesis; pyridoxine 5'-phosphate from D-erythrose 4-phosphate: step 3/5. In terms of biological role, catalyzes the reversible conversion of 3-phosphohydroxypyruvate to phosphoserine and of 3-hydroxy-2-oxo-4-phosphonooxybutanoate to phosphohydroxythreonine. This Neisseria meningitidis serogroup C / serotype 2a (strain ATCC 700532 / DSM 15464 / FAM18) protein is Phosphoserine aminotransferase.